Here is a 129-residue protein sequence, read N- to C-terminus: Fluoride-specific ion channel FluC (129 aa).

A run of 3 helical transmembrane segments spans residues 20-40 (WFLG…TLAA), 67-87 (LLII…TAEI), and 96-116 (IMTA…MMLL). Residues Gly75 and Thr78 each coordinate Na(+).

This sequence belongs to the fluoride channel Fluc/FEX (TC 1.A.43) family.

It localises to the cell inner membrane. It carries out the reaction fluoride(in) = fluoride(out). With respect to regulation, na(+) is not transported, but it plays an essential structural role and its presence is essential for fluoride channel function. In terms of biological role, fluoride-specific ion channel. Important for reducing fluoride concentration in the cell, thus reducing its toxicity. The polypeptide is Fluoride-specific ion channel FluC (Desulfovibrio desulfuricans (strain ATCC 27774 / DSM 6949 / MB)).